The chain runs to 78 residues: Large ribosomal subunit protein bL28 (78 aa).

Residues 1–25 (MSRVCQVTGKRPTVGNNRSHAKNAT) are disordered.

It belongs to the bacterial ribosomal protein bL28 family.

In Tolumonas auensis (strain DSM 9187 / NBRC 110442 / TA 4), this protein is Large ribosomal subunit protein bL28.